Here is a 208-residue protein sequence, read N- to C-terminus: MARYRGAVERLERRFGVSLALKGERRLSGKSALDKRAYGPGQHGQRRTKTSDYGLQLKEKQKAKMMYGISEKQFRSIFVEANRLDGNTGENLIRLIERRLDNVVYRMGFATTRSSARQLVTHGHVLVDGKRLDIPSYFVRSGQKIEIKEKTKSNPQVVRAMELTAQTGIVPWIDVEKDKKYGIFTRYPEREEVVVPIEERLIVELYSK.

A disordered region spans residues 31 to 50; the sequence is SALDKRAYGPGQHGQRRTKT. The region spanning 98–161 is the S4 RNA-binding domain; it reads RRLDNVVYRM…KSNPQVVRAM (64 aa).

Belongs to the universal ribosomal protein uS4 family. In terms of assembly, part of the 30S ribosomal subunit. Contacts protein S5. The interaction surface between S4 and S5 is involved in control of translational fidelity.

Its function is as follows. One of the primary rRNA binding proteins, it binds directly to 16S rRNA where it nucleates assembly of the body of the 30S subunit. Functionally, with S5 and S12 plays an important role in translational accuracy. The polypeptide is Small ribosomal subunit protein uS4 (Helicobacter pylori (strain J99 / ATCC 700824) (Campylobacter pylori J99)).